Here is a 124-residue protein sequence, read N- to C-terminus: Large ribosomal subunit protein bL12 (124 aa).

It belongs to the bacterial ribosomal protein bL12 family. Homodimer. Part of the ribosomal stalk of the 50S ribosomal subunit. Forms a multimeric L10(L12)X complex, where L10 forms an elongated spine to which 2 to 4 L12 dimers bind in a sequential fashion. Binds GTP-bound translation factors.

Its function is as follows. Forms part of the ribosomal stalk which helps the ribosome interact with GTP-bound translation factors. Is thus essential for accurate translation. The sequence is that of Large ribosomal subunit protein bL12 from Campylobacter fetus subsp. fetus (strain 82-40).